The chain runs to 178 residues: CDP-diacylglycerol--glycerol-3-phosphate 3-phosphatidyltransferase (178 aa).

A run of 4 helical transmembrane segments spans residues 28–48 (LSSLVLVLFLALMDFLDGFFA), 88–108 (LIFFLLLGRDITLIIGGIFLI), 125–145 (LFVSLSLLSVGILNVYDVNFL), and 147–167 (ILTNVLEIVSLILILVSWVDY).

Belongs to the CDP-alcohol phosphatidyltransferase class-I family.

The protein localises to the cell membrane. It carries out the reaction a CDP-1,2-diacyl-sn-glycerol + sn-glycerol 3-phosphate = a 1,2-diacyl-sn-glycero-3-phospho-(1'-sn-glycero-3'-phosphate) + CMP + H(+). It participates in phospholipid metabolism; phosphatidylglycerol biosynthesis; phosphatidylglycerol from CDP-diacylglycerol: step 1/2. Its function is as follows. This protein catalyzes the committed step to the synthesis of the acidic phospholipids. The sequence is that of CDP-diacylglycerol--glycerol-3-phosphate 3-phosphatidyltransferase (pgsA) from Aquifex aeolicus (strain VF5).